The primary structure comprises 89 residues: Small ribosomal subunit protein uS15 (89 aa).

The protein belongs to the universal ribosomal protein uS15 family. In terms of assembly, part of the 30S ribosomal subunit. Forms a bridge to the 50S subunit in the 70S ribosome, contacting the 23S rRNA.

One of the primary rRNA binding proteins, it binds directly to 16S rRNA where it helps nucleate assembly of the platform of the 30S subunit by binding and bridging several RNA helices of the 16S rRNA. Functionally, forms an intersubunit bridge (bridge B4) with the 23S rRNA of the 50S subunit in the ribosome. In Rhodococcus erythropolis (strain PR4 / NBRC 100887), this protein is Small ribosomal subunit protein uS15.